The chain runs to 966 residues: DNA mismatch repair protein MutS (966 aa).

Residue 709-716 (GPNMAGKS) coordinates ATP. A disordered region spans residues 894–914 (EGQRPPSSPAQPPAPPAPVVV). A compositionally biased stretch (pro residues) spans 899–912 (PSSPAQPPAPPAPV).

The protein belongs to the DNA mismatch repair MutS family.

Its function is as follows. This protein is involved in the repair of mismatches in DNA. It is possible that it carries out the mismatch recognition step. This protein has a weak ATPase activity. In Chloroflexus aurantiacus (strain ATCC 29366 / DSM 635 / J-10-fl), this protein is DNA mismatch repair protein MutS.